The primary structure comprises 680 residues: Calcium-binding and coiled-coil domain-containing protein 1 (680 aa).

Positions 1-30 (MEESSLSRAPSRGGVNFLNVARTYIPNTKV) are p300 KIX-binding. The tract at residues 1–190 (MEESSLSRAP…VQELEKALAA (190 aa)) is N-terminal AD (CTNNB1 binding site). Residue serine 4 is modified to Phosphoserine. Residues 45–125 (SDWIGIFKVE…FQFREPRPMD (81 aa)) are interaction with GATA1. 3 coiled-coil regions span residues 145–205 (KATV…YKGL), 232–339 (ELEE…AELE), and 417–514 (QSVE…ADEK). Residues 501 to 680 (RKLEARLEKV…HTYTHTHTHA (180 aa)) are C-terminal AD (CTNNB1 binding site); interaction with CCAR1. The disordered stretch occupies residues 511–606 (ADEKWSEDPA…DSEAEDEKSV (96 aa)). The segment at 654–679 (WKECPICKERFPVHTQTHTYTHTHTH) adopts a UBZ1-type zinc-finger fold. Zn(2+) contacts are provided by cysteine 657, cysteine 660, histidine 675, and histidine 679.

It belongs to the CALCOCO family. Part of a calphoglin complex consisting of CALCOCO1, PPA1 and PGM. Interacts with the bHLH-PAS domains of GRIP1, AHR and ARNT. Interacts with CTNNB1 via both its N- and C-terminal regions. Interacts with EP300. Interacts with CCAR1 (via N-terminus) and GATA1.

Its subcellular location is the cytoplasm. It is found in the nucleus. In terms of biological role, functions as a coactivator for aryl hydrocarbon and nuclear receptors (NR). Recruited to promoters through its contact with the N-terminal basic helix-loop-helix-Per-Arnt-Sim (PAS) domain of transcription factors or coactivators, such as NCOA2. During ER-activation acts synergistically in combination with other NCOA2-binding proteins, such as EP300, CREBBP and CARM1. Involved in the transcriptional activation of target genes in the Wnt/CTNNB1 pathway. Functions as a secondary coactivator in LEF1-mediated transcriptional activation via its interaction with CTNNB1. Coactivator function for nuclear receptors and LEF1/CTNNB1 involves differential utilization of two different activation regions. In association with CCAR1 enhances GATA1- and MED1-mediated transcriptional activation from the gamma-globin promoter during erythroid differentiation of K562 erythroleukemia cells. Its function is as follows. Seems to enhance inorganic pyrophosphatase thus activating phosphogluomutase (PMG). Probably functions as a component of the calphoglin complex, which is involved in linking cellular metabolism (phosphate and glucose metabolism) with other core functions including protein synthesis and degradation, calcium signaling and cell growth. The chain is Calcium-binding and coiled-coil domain-containing protein 1 (CALCOCO1) from Bos taurus (Bovine).